Here is a 216-residue protein sequence, read N- to C-terminus: Ras-related protein RABA1c (216 aa).

A GTP-binding site is contributed by 20–27; the sequence is GDSGVGKS. The Effector region motif lies at 42–50; sequence SKSTIGVEF. Residues 68–72, 126–129, and 156–157 contribute to the GTP site; these read DTAGQ, NKSD, and SA. Residues cysteine 213 and cysteine 214 are each lipidated (S-geranylgeranyl cysteine).

The protein belongs to the small GTPase superfamily. Rab family.

It is found in the cell membrane. Its function is as follows. Intracellular vesicle trafficking and protein transport. The chain is Ras-related protein RABA1c (RABA1C) from Arabidopsis thaliana (Mouse-ear cress).